Here is a 406-residue protein sequence, read N- to C-terminus: Calsequestrin-2 (406 aa).

The first 19 residues, 1-19, serve as a signal peptide directing secretion; that stretch reads MKATCWILAGFCLLFCCKA. N-linked (GlcNAc...) asparagine glycosylation is present at Asn335. Residues 365–406 are disordered; sequence VLSGKINTEDDDDDDDDDDDDDDDDDDDDDDDDDDDDDDDDD. Over residues 373–406 the composition is skewed to acidic residues; that stretch reads EDDDDDDDDDDDDDDDDDDDDDDDDDDDDDDDDD.

Belongs to the calsequestrin family. Skeletal and heart muscle.

The protein localises to the sarcoplasmic reticulum lumen. In terms of biological role, calsequestrin is a high-capacity, moderate affinity, calcium-binding protein and thus acts as an internal calcium store in muscle. Calcium ions are bound by clusters of acidic residues at the protein surface, especially at the interface between subunits. Can bind around 60 Ca(2+) ions. Regulates the release of lumenal Ca(2+) via the calcium release channel RYR2; this plays an important role in triggering muscle contraction. Plays a role in excitation-contraction coupling in the heart and in regulating the rate of heart beats. The polypeptide is Calsequestrin-2 (CASQ2) (Gallus gallus (Chicken)).